Here is a 400-residue protein sequence, read N- to C-terminus: Formate-dependent phosphoribosylglycinamide formyltransferase (400 aa).

N(1)-(5-phospho-beta-D-ribosyl)glycinamide-binding positions include 22-23 (EL) and glutamate 82. ATP-binding positions include arginine 115, lysine 156, 161–166 (SSGKGQ), 196–199 (EGFI), and glutamate 204. The ATP-grasp domain occupies 120 to 309 (RLAAETLCLP…EFALHARAIL (190 aa)). Residues glutamate 268 and glutamate 280 each coordinate Mg(2+). Residues aspartate 287, lysine 361, and 368-369 (RR) each bind N(1)-(5-phospho-beta-D-ribosyl)glycinamide.

Belongs to the PurK/PurT family. Homodimer.

The catalysed reaction is N(1)-(5-phospho-beta-D-ribosyl)glycinamide + formate + ATP = N(2)-formyl-N(1)-(5-phospho-beta-D-ribosyl)glycinamide + ADP + phosphate + H(+). It functions in the pathway purine metabolism; IMP biosynthesis via de novo pathway; N(2)-formyl-N(1)-(5-phospho-D-ribosyl)glycinamide from N(1)-(5-phospho-D-ribosyl)glycinamide (formate route): step 1/1. Its function is as follows. Involved in the de novo purine biosynthesis. Catalyzes the transfer of formate to 5-phospho-ribosyl-glycinamide (GAR), producing 5-phospho-ribosyl-N-formylglycinamide (FGAR). Formate is provided by PurU via hydrolysis of 10-formyl-tetrahydrofolate. The polypeptide is Formate-dependent phosphoribosylglycinamide formyltransferase (Xanthomonas euvesicatoria pv. vesicatoria (strain 85-10) (Xanthomonas campestris pv. vesicatoria)).